Here is a 517-residue protein sequence, read N- to C-terminus: Benzoate 4-monooxygenase bphA (517 aa).

A helical membrane pass occupies residues 4-24; sequence LLLSPYGAYLGLALLVLYYLL. N282 and N325 each carry an N-linked (GlcNAc...) asparagine glycan. C461 lines the heme pocket.

The protein belongs to the cytochrome P450 family. Requires heme as cofactor.

It localises to the membrane. The catalysed reaction is benzoate + reduced [NADPH--hemoprotein reductase] + O2 = 4-hydroxybenzoate + oxidized [NADPH--hemoprotein reductase] + H2O + H(+). Its function is as follows. Cytochrome P450 monooxygenase; part of the benzoic acid degradation pathway also known as the protocatechuic acid pathway. Benzoic acid debradation begins with the conversion of benzoic acid into 4-hydroxybenzoic acid through hydroxylation by the benzoate-4-monooxygenase bphA, and its partner NADPH-cytochrome P450 reductase cprA which act as a mediator in electron donation from NADPH. 4-Hydroxybenzoic acid is then converted into 3,4-dihydroxybenzoic acid (also called protocatechuic acid) by the p-hydroxybenzoate-m-hydroxylase phhA. Protocatechuic acid is converted into 3-carboxy-cis,cis-muconic acid by the intradiol ring-cleavage dioxygenase prcA, which is further metabolized through the 3-oxoadipate pathway to finally enter the tricarboxylic acid cycle (TCA). This Aspergillus niger (strain ATCC MYA-4892 / CBS 513.88 / FGSC A1513) protein is Benzoate 4-monooxygenase bphA.